Consider the following 341-residue polypeptide: L-threonine 3-dehydrogenase (341 aa).

Residue cysteine 38 coordinates Zn(2+). Active-site charge relay system residues include threonine 40 and histidine 43. Positions 63, 64, 93, 96, 99, and 107 each coordinate Zn(2+). NAD(+) contacts are provided by residues isoleucine 175, aspartate 195, arginine 200, 262–264 (LGI), and 286–287 (IY).

This sequence belongs to the zinc-containing alcohol dehydrogenase family. In terms of assembly, homotetramer. Zn(2+) serves as cofactor.

It localises to the cytoplasm. It catalyses the reaction L-threonine + NAD(+) = (2S)-2-amino-3-oxobutanoate + NADH + H(+). Its pathway is amino-acid degradation; L-threonine degradation via oxydo-reductase pathway; glycine from L-threonine: step 1/2. Its function is as follows. Catalyzes the NAD(+)-dependent oxidation of L-threonine to 2-amino-3-ketobutyrate. In Escherichia coli O139:H28 (strain E24377A / ETEC), this protein is L-threonine 3-dehydrogenase.